The following is a 243-amino-acid chain: Proteasome subunit beta (243 aa).

Positions Met1 to Asp40 are disordered. A propeptide spans Met1 to Gly49 (removed in mature form; by autocatalysis). Thr50 serves as the catalytic Nucleophile.

This sequence belongs to the peptidase T1B family. In terms of assembly, the 20S proteasome core is composed of 14 alpha and 14 beta subunits that assemble into four stacked heptameric rings, resulting in a barrel-shaped structure. The two inner rings, each composed of seven catalytic beta subunits, are sandwiched by two outer rings, each composed of seven alpha subunits. The catalytic chamber with the active sites is on the inside of the barrel. Has a gated structure, the ends of the cylinder being occluded by the N-termini of the alpha-subunits. Is capped at one or both ends by the proteasome regulatory ATPase, PAN.

It is found in the cytoplasm. The catalysed reaction is Cleavage of peptide bonds with very broad specificity.. With respect to regulation, the formation of the proteasomal ATPase PAN-20S proteasome complex, via the docking of the C-termini of PAN into the intersubunit pockets in the alpha-rings, triggers opening of the gate for substrate entry. Interconversion between the open-gate and close-gate conformations leads to a dynamic regulation of the 20S proteasome proteolysis activity. Component of the proteasome core, a large protease complex with broad specificity involved in protein degradation. In Haloquadratum walsbyi (strain DSM 16790 / HBSQ001), this protein is Proteasome subunit beta.